The following is a 74-amino-acid chain: UPF0435 protein BAA_0470 (74 aa).

Belongs to the UPF0435 family.

The sequence is that of UPF0435 protein BAA_0470 from Bacillus anthracis (strain A0248).